A 313-amino-acid polypeptide reads, in one-letter code: Ribosomal RNA small subunit methyltransferase H (313 aa).

Residues 35–37, aspartate 55, phenylalanine 80, aspartate 102, and glutamine 109 each bind S-adenosyl-L-methionine; that span reads GGH.

The protein belongs to the methyltransferase superfamily. RsmH family.

It localises to the cytoplasm. It catalyses the reaction cytidine(1402) in 16S rRNA + S-adenosyl-L-methionine = N(4)-methylcytidine(1402) in 16S rRNA + S-adenosyl-L-homocysteine + H(+). In terms of biological role, specifically methylates the N4 position of cytidine in position 1402 (C1402) of 16S rRNA. This is Ribosomal RNA small subunit methyltransferase H from Shewanella loihica (strain ATCC BAA-1088 / PV-4).